The primary structure comprises 81 residues: Spore coat protein F-like protein YraG (81 aa).

This sequence belongs to the CotF family.

It localises to the spore coat. The chain is Spore coat protein F-like protein YraG (yraG) from Bacillus subtilis (strain 168).